The chain runs to 263 residues: 3-deoxy-manno-octulosonate cytidylyltransferase 1 (263 aa).

Belongs to the KdsB family.

The protein resides in the cytoplasm. The enzyme catalyses 3-deoxy-alpha-D-manno-oct-2-ulosonate + CTP = CMP-3-deoxy-beta-D-manno-octulosonate + diphosphate. Its pathway is nucleotide-sugar biosynthesis; CMP-3-deoxy-D-manno-octulosonate biosynthesis; CMP-3-deoxy-D-manno-octulosonate from 3-deoxy-D-manno-octulosonate and CTP: step 1/1. The protein operates within bacterial outer membrane biogenesis; lipopolysaccharide biosynthesis. Activates KDO (a required 8-carbon sugar) for incorporation into bacterial lipopolysaccharide in Gram-negative bacteria. This chain is 3-deoxy-manno-octulosonate cytidylyltransferase 1, found in Burkholderia ambifaria (strain MC40-6).